We begin with the raw amino-acid sequence, 461 residues long: tRNA modification GTPase MnmE (461 aa).

Arg22, Glu87, and Arg126 together coordinate (6S)-5-formyl-5,6,7,8-tetrahydrofolate. The 160-residue stretch at 223-382 (GLSTVILGRP…LEEAIAALFF (160 aa)) folds into the TrmE-type G domain. Position 233 (Asn233) interacts with K(+). GTP-binding positions include 233 to 238 (NVGKSS), 252 to 258 (TDIAGTT), and 277 to 280 (DTAG). Ser237 contributes to the Mg(2+) binding site. Residues Thr252, Ile254, and Thr257 each coordinate K(+). Thr258 contacts Mg(2+). Position 461 (Lys461) interacts with (6S)-5-formyl-5,6,7,8-tetrahydrofolate.

The protein belongs to the TRAFAC class TrmE-Era-EngA-EngB-Septin-like GTPase superfamily. TrmE GTPase family. In terms of assembly, homodimer. Heterotetramer of two MnmE and two MnmG subunits. The cofactor is K(+).

The protein localises to the cytoplasm. Its function is as follows. Exhibits a very high intrinsic GTPase hydrolysis rate. Involved in the addition of a carboxymethylaminomethyl (cmnm) group at the wobble position (U34) of certain tRNAs, forming tRNA-cmnm(5)s(2)U34. This chain is tRNA modification GTPase MnmE, found in Lysinibacillus sphaericus (strain C3-41).